Consider the following 303-residue polypeptide: Hemolysin E, chromosomal (303 aa).

Cys-87 and Cys-285 are oxidised to a cystine. The helical transmembrane segment at 183-203 (AGVVAGPFGLIISYSIAAGVV) threads the bilayer.

Monomer and oligomer. In periplasm, it is present as a monomer, while in outer membrane vesicles, it oligomerizes to form a pore structure that is active. The pore is formed by a dodecamer. In terms of processing, in periplasm, it forms a disulfide bond between Cys-87 and Cys-285, which prevents the oligomerization. In outer membrane vesicles, the redox status prevents formation of the disulfide bond, leading to oligomerization and pore formation.

It is found in the secreted. The protein resides in the periplasm. It localises to the host cell membrane. Its function is as follows. Toxin, which has some hemolytic activity towards mammalian cells. Acts by forming a pore-like structure upon contact with mammalian cells. This is Hemolysin E, chromosomal (hlyE) from Escherichia coli (strain K12).